A 254-amino-acid polypeptide reads, in one-letter code: Alcohol dehydrogenase (254 aa).

The residue at position 1 (M1) is an N-acetylmethionine. F10–F33 provides a ligand contact to NAD(+). S138 serves as a coordination point for substrate. Y151 (proton acceptor) is an active-site residue.

This sequence belongs to the short-chain dehydrogenases/reductases (SDR) family. Homodimer.

The enzyme catalyses a primary alcohol + NAD(+) = an aldehyde + NADH + H(+). It carries out the reaction a secondary alcohol + NAD(+) = a ketone + NADH + H(+). The protein is Alcohol dehydrogenase (Adh) of Drosophila lebanonensis (Fruit fly).